Here is a 245-residue protein sequence, read N- to C-terminus: Adenosylcobinamide-GDP ribazoletransferase (245 aa).

The next 5 helical transmembrane spans lie at Phe31–Ala51, Pro61–Leu81, Val113–Leu133, Ala138–Thr158, and Leu192–Leu212.

Belongs to the CobS family. Mg(2+) is required as a cofactor.

It is found in the cell inner membrane. The enzyme catalyses alpha-ribazole + adenosylcob(III)inamide-GDP = adenosylcob(III)alamin + GMP + H(+). It catalyses the reaction alpha-ribazole 5'-phosphate + adenosylcob(III)inamide-GDP = adenosylcob(III)alamin 5'-phosphate + GMP + H(+). It participates in cofactor biosynthesis; adenosylcobalamin biosynthesis; adenosylcobalamin from cob(II)yrinate a,c-diamide: step 7/7. Its function is as follows. Joins adenosylcobinamide-GDP and alpha-ribazole to generate adenosylcobalamin (Ado-cobalamin). Also synthesizes adenosylcobalamin 5'-phosphate from adenosylcobinamide-GDP and alpha-ribazole 5'-phosphate. This chain is Adenosylcobinamide-GDP ribazoletransferase, found in Pseudomonas aeruginosa (strain ATCC 15692 / DSM 22644 / CIP 104116 / JCM 14847 / LMG 12228 / 1C / PRS 101 / PAO1).